Reading from the N-terminus, the 236-residue chain is Chorionic somatomammotropin hormone (236 aa).

Residues 1-36 (MAPASSHREHQWTCNLVRGSRLLLLLVVSNLILCQG) form the signal peptide. Disulfide bonds link Cys-44/Cys-51, Cys-97/Cys-212, and Cys-229/Cys-234.

This sequence belongs to the somatotropin/prolactin family.

It localises to the secreted. In Ovis aries (Sheep), this protein is Chorionic somatomammotropin hormone (CSH).